Consider the following 76-residue polypeptide: Small ribosomal subunit protein bS18 (76 aa).

It belongs to the bacterial ribosomal protein bS18 family. Part of the 30S ribosomal subunit. Forms a tight heterodimer with protein bS6.

Functionally, binds as a heterodimer with protein bS6 to the central domain of the 16S rRNA, where it helps stabilize the platform of the 30S subunit. This Pseudomonas aeruginosa (strain LESB58) protein is Small ribosomal subunit protein bS18.